The sequence spans 232 residues: AA9 family lytic polysaccharide monooxygenase C (232 aa).

A signal peptide spans 1–19 (MKAAVSLALLVAVAGAASA). 2 residues coordinate Cu(2+): His-20 and His-91. Cys-61 and Cys-180 are oxidised to a cystine. 2 residues coordinate O2: His-166 and Gln-175. Tyr-177 contributes to the Cu(2+) binding site. Asn-184 carries N-linked (GlcNAc...) asparagine glycosylation.

This sequence belongs to the polysaccharide monooxygenase AA9 family. It depends on Cu(2+) as a cofactor.

It localises to the secreted. It carries out the reaction [(1-&gt;4)-beta-D-glucosyl]n+m + reduced acceptor + O2 = 4-dehydro-beta-D-glucosyl-[(1-&gt;4)-beta-D-glucosyl]n-1 + [(1-&gt;4)-beta-D-glucosyl]m + acceptor + H2O.. Lytic polysaccharide monooxygenase (LPMO) that depolymerizes crystalline and amorphous polysaccharides via the oxidation of scissile alpha- or beta-(1-4)-glycosidic bonds, yielding C1 or C4 oxidation products. Catalysis by LPMOs requires the reduction of the active-site copper from Cu(II) to Cu(I) by a reducing agent and H(2)O(2) or O(2) as a cosubstrate. This is AA9 family lytic polysaccharide monooxygenase C from Malbranchea cinnamomea (Thermophilic fungus).